A 592-amino-acid polypeptide reads, in one-letter code: Outer spore wall assembly protein SHE10 (592 aa).

A signal peptide spans 1-23 (MRFFKRFLLTLTVFIYTLRYLHC). Coiled-coil stretches lie at residues 354-385 (ENNI…LYEE) and 448-583 (LNQF…KQMG). Positions 507 to 580 (QSEQEERIKS…EVRKQEEARK (74 aa)) are enriched in basic and acidic residues. The tract at residues 507-592 (QSEQEERIKS…GSPPPPQQQQ (86 aa)) is disordered.

It belongs to the SHE10 family. In terms of assembly, component of the mitochondria-localized RNase mitochondrial RNA-processing (RNase MRP) composed of one single RNA encoded by the NME1 gene and at least 31 proteins. Absent in the nucleus-localized RNase MRP (NuMRP).

It localises to the mitochondrion. Its function is as follows. Involved in spore wall assembly. May be a component of the mitochondrial RNase MRP (MtMRP), a ribonucleoprotein endoribonuclease involved in the cleaving RNA transcripts to generate primers for DNA replication in mitochondria. This is Outer spore wall assembly protein SHE10 from Vanderwaltozyma polyspora (strain ATCC 22028 / DSM 70294 / BCRC 21397 / CBS 2163 / NBRC 10782 / NRRL Y-8283 / UCD 57-17) (Kluyveromyces polysporus).